The following is a 187-amino-acid chain: Crossover junction endodeoxyribonuclease RuvC (187 aa).

Active-site residues include D7, E67, and D140. The Mg(2+) site is built by D7, E67, and D140.

Belongs to the RuvC family. In terms of assembly, homodimer which binds Holliday junction (HJ) DNA. The HJ becomes 2-fold symmetrical on binding to RuvC with unstacked arms; it has a different conformation from HJ DNA in complex with RuvA. In the full resolvosome a probable DNA-RuvA(4)-RuvB(12)-RuvC(2) complex forms which resolves the HJ. Mg(2+) serves as cofactor.

Its subcellular location is the cytoplasm. The catalysed reaction is Endonucleolytic cleavage at a junction such as a reciprocal single-stranded crossover between two homologous DNA duplexes (Holliday junction).. Its function is as follows. The RuvA-RuvB-RuvC complex processes Holliday junction (HJ) DNA during genetic recombination and DNA repair. Endonuclease that resolves HJ intermediates. Cleaves cruciform DNA by making single-stranded nicks across the HJ at symmetrical positions within the homologous arms, yielding a 5'-phosphate and a 3'-hydroxyl group; requires a central core of homology in the junction. The consensus cleavage sequence is 5'-(A/T)TT(C/G)-3'. Cleavage occurs on the 3'-side of the TT dinucleotide at the point of strand exchange. HJ branch migration catalyzed by RuvA-RuvB allows RuvC to scan DNA until it finds its consensus sequence, where it cleaves and resolves the cruciform DNA. This is Crossover junction endodeoxyribonuclease RuvC from Chlorobium phaeobacteroides (strain DSM 266 / SMG 266 / 2430).